The sequence spans 156 residues: Small ribosomal subunit protein uS7 (156 aa).

The protein belongs to the universal ribosomal protein uS7 family. Part of the 30S ribosomal subunit. Contacts proteins S9 and S11.

In terms of biological role, one of the primary rRNA binding proteins, it binds directly to 16S rRNA where it nucleates assembly of the head domain of the 30S subunit. Is located at the subunit interface close to the decoding center, probably blocks exit of the E-site tRNA. This is Small ribosomal subunit protein uS7 from Synechococcus sp. (strain CC9311).